We begin with the raw amino-acid sequence, 101 residues long: NADH-quinone oxidoreductase subunit K (101 aa).

3 helical membrane passes run 4 to 24 (LEHYLTVSAALLVIGIFGIFL), 30 to 50 (IVILMSIELMLLAVNINLVAF), and 65 to 85 (FVLTVAAAEAAIGLAILVTFF).

It belongs to the complex I subunit 4L family. As to quaternary structure, NDH-1 is composed of 14 different subunits. Subunits NuoA, H, J, K, L, M, N constitute the membrane sector of the complex.

It is found in the cell inner membrane. It carries out the reaction a quinone + NADH + 5 H(+)(in) = a quinol + NAD(+) + 4 H(+)(out). Its function is as follows. NDH-1 shuttles electrons from NADH, via FMN and iron-sulfur (Fe-S) centers, to quinones in the respiratory chain. The immediate electron acceptor for the enzyme in this species is believed to be ubiquinone. Couples the redox reaction to proton translocation (for every two electrons transferred, four hydrogen ions are translocated across the cytoplasmic membrane), and thus conserves the redox energy in a proton gradient. The chain is NADH-quinone oxidoreductase subunit K from Cereibacter sphaeroides (strain ATCC 17029 / ATH 2.4.9) (Rhodobacter sphaeroides).